The following is a 754-amino-acid chain: Nibrin (754 aa).

The FHA domain maps to 24 to 83 (YVVGRKNCAILIEKDQSISRNHAVLTANFSVTNLSQTDEIPVLALKDNSKYGTFVNEEKM). 2 consecutive BRCT domains span residues 105-181 (KFRI…TEFL) and 224-315 (GKTF…LAVI). A mediates interaction with SP100 region spans residues 111 to 328 (EPLVACSSCL…TKNYCDPQGH (218 aa)). Residues 221–402 (IFKGKTFIFL…FRMLSQDAPT (182 aa)) form an interaction with MTOR, MAPKAP1 and RICTOR region. Residue Ser278 is modified to Phosphoserine; by ATM. The tract at residues 326 to 346 (QGHPSTGLKTTTPGPSLSQGL) is disordered. Residues 328–346 (HPSTGLKTTTPGPSLSQGL) show a composition bias toward polar residues. Thr337 carries the post-translational modification Phosphothreonine. The residue at position 343 (Ser343) is a Phosphoserine; by ATM. Phosphoserine is present on Ser347. Lys388 bears the N6-lactoyllysine mark. 2 disordered regions span residues 396–415 (LSQD…NNNS) and 431–475 (LSPT…NQEM). Phosphoserine is present on Ser397. At Thr402 the chain carries Phosphothreonine. Composition is skewed to polar residues over residues 431–440 (LSPTKLPSIN) and 447–462 (SQQQ…FQPS). Ser432 is subject to Phosphoserine. A Glycyl lysine isopeptide (Lys-Gly) (interchain with G-Cter in ubiquitin) cross-link involves residue Lys435. Positions 461–467 (PSTKKRE) match the Nuclear localization signal motif. Phosphoserine is present on residues Ser509 and Ser518. Glycyl lysine isopeptide (Lys-Gly) (interchain with G-Cter in SUMO2) cross-links involve residues Lys571 and Lys582. Phosphoserine is present on residues Ser615 and Ser673. Residues Lys686, Lys690, and Lys735 each participate in a glycyl lysine isopeptide (Lys-Gly) (interchain with G-Cter in ubiquitin) cross-link. Residues 740-749 (ADDLFRYNPY) carry the FxF/Y motif motif.

Belongs to the Nibrin family. Component of the MRN complex composed of two heterodimers RAD50 and MRE11 associated with a single NBN. The MRN complexes dimerize on DNA to form joined MRN-MRN oligomers required for DNA double-strand break repair. The MRN complexes dimerize on DNA to form joined MRN-MRN oligomers required for DNA double-strand break repair. As part of the MRN complex, interacts with MCM9; the interaction recruits the complex to DNA repair sites. Component of the BASC complex, at least composed of BRCA1, MSH2, MSH6, MLH1, ATM, BLM, RAD50, MRE11 and NBN. Interacts with histone H2AX; this requires phosphorylation of H2AX on 'Ser-139' and promotes NBN recruitment to DNA damage sites. Interacts with (phosphorylated) MDC1; promoting NBN recruitment to DNA damage sites. Interacts with (phosphorylated) RAD17; promoting NBN recruitment to DNA damage sites. Interacts (via FxF/Y motif) with ATM. Interacts with HJURP. Interacts with INTS3. Interacts with KPNA2. Interacts with TERF2; interaction is disrupted upon NBN phosphorylation by CDK2. Interacts with (phosphorylated) RBBP8/CtIP; the interaction links the role of the MRN complex in DNA double-strand break sensing to resection. Interacts with SP100; recruits NBN to PML bodies. Interacts with ATF2. Interacts with MTOR, MAPKAP1 isoform 2 and RICTOR; indicative for an association with the mTORC2 complex. Interacts with MRNIP. Interacts with UFL1; promoting UFL1 recruitment to double-strand breaks following DNA damage. Interacts with CYREN (via XLF motif). Phosphorylated by ATM in response of ionizing radiation, and such phosphorylation is responsible intra-S phase checkpoint control and telomere maintenance. Phosphorylated at Ser-432 by CDK2 in S/G2 phases abolishes interaction with TERF2, enabling DCLRE1B/Apollo recruitment to telomeres. Phosphorylation at Ser-432 in response to dysfunctional telomeres promotes non-homologous end joining repair at telomeres, while dephosphorylation by PPP1CA promotes microhomology-mediated end-joining (MMEJ) repair. In terms of processing, ubiquitinated at Lys-435 via 'Lys-6'-linked ubiquitin chains by RNF8, promoting NBN recruitment to DNA double-strand breaks (DSBs). Ubiquitinated at Lys-686 and Lys-689 via 'Lys-63'-linked ubiquitin chains by PELI1: ubiquitination takes place following PELI1 phosphorylation and promotes ATM activation and DNA repair. Ubiquitinated at Lys-735 via 'Lys-63'-linked ubiquitin chains by the SCF(SKP2) complex: ubiquitination takes place following SKP2 phosphorylation and promotes ATM activation and DNA repair. Post-translationally, lactylation at Lys-388 by KAT5 in response to DNA damage promotes recruitment of the MRN complex to DNA damage sites. Delactylated by HDAC3.

Its subcellular location is the nucleus. The protein resides in the chromosome. It is found in the PML body. It localises to the telomere. Its function is as follows. Component of the MRN complex, which plays a central role in double-strand break (DSB) repair, DNA recombination, maintenance of telomere integrity and meiosis. The MRN complex is involved in the repair of DNA double-strand breaks (DSBs) via homologous recombination (HR), an error-free mechanism which primarily occurs during S and G2 phases. The complex (1) mediates the end resection of damaged DNA, which generates proper single-stranded DNA, a key initial steps in HR, and is (2) required for the recruitment of other repair factors and efficient activation of ATM and ATR upon DNA damage. The MRN complex possesses single-strand endonuclease activity and double-strand-specific 3'-5' exonuclease activity, which are provided by MRE11, to initiate end resection, which is required for single-strand invasion and recombination. Within the MRN complex, NBN acts as a protein-protein adapter, which specifically recognizes and binds phosphorylated proteins, promoting their recruitment to DNA damage sites. Recruits MRE11 and RAD50 components of the MRN complex to DSBs in response to DNA damage. Promotes the recruitment of PI3/PI4-kinase family members ATM, ATR, and probably DNA-PKcs to the DNA damage sites, activating their functions. Mediates the recruitment of phosphorylated RBBP8/CtIP to DSBs, leading to cooperation between the MRN complex and RBBP8/CtIP to initiate end resection. RBBP8/CtIP specifically promotes the endonuclease activity of the MRN complex to clear DNA ends containing protein adducts. The MRN complex is also required for the processing of R-loops. NBN also functions in telomere length maintenance via its interaction with TERF2: interaction with TERF2 during G1 phase preventing recruitment of DCLRE1B/Apollo to telomeres. NBN also promotes DNA repair choice at dysfunctional telomeres: NBN phosphorylation by CK2 promotes non-homologous end joining repair at telomeres, while unphosphorylated NBN promotes microhomology-mediated end-joining (MMEJ) repair. Enhances AKT1 phosphorylation possibly by association with the mTORC2 complex. The polypeptide is Nibrin (NBN) (Pongo abelii (Sumatran orangutan)).